Here is a 271-residue protein sequence, read N- to C-terminus: Fatty acid elongase A (271 aa).

7 helical membrane-spanning segments follow: residues 35–55 (ILFPIVCSFGYLALIYGLQIF), 68–88 (AMFHNLFLCLLSLLMFLGIVI), 102–122 (IICKPIDSGLVQFSYYIFYLS), 139–159 (SLLFLHVWHHFITLWLVWANL), 165–185 (CQWVDISANCFVHIVMYFYYF), 198–220 (HITTCQIIQFIVDMSSHLAWHFY), and 237–257 (TSAFSDFVILSFLGLFIQFFV).

This sequence belongs to the ELO family.

The protein localises to the membrane. The catalysed reaction is a very-long-chain acyl-CoA + malonyl-CoA + H(+) = a very-long-chain 3-oxoacyl-CoA + CO2 + CoA. Fatty acid elongase with strict substrate specificity for monounsaturated fatty acids, in particular 16:1 (delta-9) to produce the unusual 18:1 (delta-11) fatty acid. The protein is Fatty acid elongase A (eloA) of Dictyostelium discoideum (Social amoeba).